Consider the following 93-residue polypeptide: Putative septation protein SpoVG (93 aa).

Belongs to the SpoVG family.

Functionally, could be involved in septation. The chain is Putative septation protein SpoVG from Treponema denticola (strain ATCC 35405 / DSM 14222 / CIP 103919 / JCM 8153 / KCTC 15104).